We begin with the raw amino-acid sequence, 206 residues long: Enterobactin synthase component D (206 aa).

Residues aspartate 107, glutamate 109, and glutamate 152 each coordinate Mg(2+).

This sequence belongs to the P-Pant transferase superfamily. EntD family. In terms of assembly, entB, EntD, EntE, and EntF form a multienzyme complex called enterobactin synthase. It depends on Mg(2+) as a cofactor.

It is found in the membrane. It catalyses the reaction apo-[aryl-carrier protein] + CoA = holo-[aryl-carrier protein] + adenosine 3',5'-bisphosphate + H(+). It carries out the reaction apo-[peptidyl-carrier protein] + CoA = holo-[peptidyl-carrier protein] + adenosine 3',5'-bisphosphate + H(+). The protein operates within siderophore biosynthesis; enterobactin biosynthesis. In terms of biological role, involved in the biosynthesis of the siderophore enterobactin (enterochelin), which is a macrocyclic trimeric lactone of N-(2,3-dihydroxybenzoyl)-serine. The serine trilactone serves as a scaffolding for the three catechol functionalities that provide hexadentate coordination for the tightly ligated iron(2+) atoms. Plays an essential role in the assembly of the enterobactin by catalyzing the transfer of the 4'-phosphopantetheine (Ppant) moiety from coenzyme A to the apo-domains of both EntB (ArCP domain) and EntF (PCP domain) to yield their holo-forms which make them competent for the activation of 2,3-dihydroxybenzoate (DHB) and L-serine, respectively. In Escherichia coli (strain K12), this protein is Enterobactin synthase component D.